Here is a 110-residue protein sequence, read N- to C-terminus: UPF0122 protein YlxM (110 aa).

This sequence belongs to the UPF0122 family.

In terms of biological role, might take part in the signal recognition particle (SRP) pathway. This is inferred from the conservation of its genetic proximity to ftsY/ffh. May be a regulatory protein. The protein is UPF0122 protein YlxM (ylxM) of Bacillus subtilis (strain 168).